Consider the following 301-residue polypeptide: Ribonuclease HIII (301 aa).

The region spanning 84–301 (ASAIGSDEVG…TEKAARIAKK (218 aa)) is the RNase H type-2 domain. Residues aspartate 90, glutamate 91, and aspartate 195 each coordinate a divalent metal cation.

The protein belongs to the RNase HII family. RnhC subfamily. Requires Mn(2+) as cofactor. It depends on Mg(2+) as a cofactor.

Its subcellular location is the cytoplasm. It carries out the reaction Endonucleolytic cleavage to 5'-phosphomonoester.. Functionally, endonuclease that specifically degrades the RNA of RNA-DNA hybrids. The chain is Ribonuclease HIII from Geobacillus sp. (strain WCH70).